The chain runs to 489 residues: 6-phosphogluconate dehydrogenase, decarboxylating 1 (489 aa).

NADP(+) contacts are provided by residues 9-14 and 32-34; these read GLAVMG and NRT. S50 is modified (phosphoserine). NADP(+) is bound by residues 74 to 76 and N102; that span reads VKA. Substrate contacts are provided by residues N102 and 128–130; that span reads SGG. K182 acts as the Proton acceptor in catalysis. 185 to 186 contacts substrate; the sequence is HN. The active-site Proton donor is E189. Residues Y190, K259, R286, R446, and H452 each contribute to the substrate site.

This sequence belongs to the 6-phosphogluconate dehydrogenase family. Homodimer.

Its subcellular location is the cytoplasm. It catalyses the reaction 6-phospho-D-gluconate + NADP(+) = D-ribulose 5-phosphate + CO2 + NADPH. Its pathway is carbohydrate degradation; pentose phosphate pathway; D-ribulose 5-phosphate from D-glucose 6-phosphate (oxidative stage): step 3/3. Functionally, catalyzes the oxidative decarboxylation of 6-phosphogluconate to ribulose 5-phosphate and CO(2), with concomitant reduction of NADP to NADPH. This is 6-phosphogluconate dehydrogenase, decarboxylating 1 (GND1) from Saccharomyces cerevisiae (strain ATCC 204508 / S288c) (Baker's yeast).